The sequence spans 348 residues: 4-hydroxyphenylpyruvate dioxygenase (348 aa).

VOC domains lie at 11–141 (GFAF…ITSP) and 151–303 (AIDH…IFTE). Fe cation contacts are provided by H154, H232, and E312.

The protein belongs to the 4HPPD family. Requires Fe cation as cofactor.

The enzyme catalyses 3-(4-hydroxyphenyl)pyruvate + O2 = homogentisate + CO2. Its function is as follows. Catalyzes the transformation of p-hydroxyphenylpyruvate into HGA. Has hemolytic and brown pigment production activity. This is 4-hydroxyphenylpyruvate dioxygenase (lly) from Legionella pneumophila subsp. pneumophila (strain Philadelphia 1 / ATCC 33152 / DSM 7513).